The following is a 441-amino-acid chain: Ribosomal protein uS12 methylthiotransferase RimO (441 aa).

Positions 6 to 116 (QKVGIVSLGC…VVAAVHEAAP (111 aa)) constitute an MTTase N-terminal domain. Residues Cys15, Cys51, Cys80, Cys147, Cys151, and Cys154 each coordinate [4Fe-4S] cluster. The region spanning 133–370 (LTPRHYAYLK…MAAQQEISER (238 aa)) is the Radical SAM core domain. A TRAM domain is found at 373-439 (AQKVGTVIEA…EYDLWGSLAG (67 aa)).

The protein belongs to the methylthiotransferase family. RimO subfamily. [4Fe-4S] cluster is required as a cofactor.

Its subcellular location is the cytoplasm. It carries out the reaction L-aspartate(89)-[ribosomal protein uS12]-hydrogen + (sulfur carrier)-SH + AH2 + 2 S-adenosyl-L-methionine = 3-methylsulfanyl-L-aspartate(89)-[ribosomal protein uS12]-hydrogen + (sulfur carrier)-H + 5'-deoxyadenosine + L-methionine + A + S-adenosyl-L-homocysteine + 2 H(+). Its function is as follows. Catalyzes the methylthiolation of an aspartic acid residue of ribosomal protein uS12. This Rhodospirillum rubrum (strain ATCC 11170 / ATH 1.1.1 / DSM 467 / LMG 4362 / NCIMB 8255 / S1) protein is Ribosomal protein uS12 methylthiotransferase RimO.